The sequence spans 135 residues: MADKLHFSLVSPARELFSGQVDHVIAPGTEGEFGVLVNHAPFMTTLKNGVVRVLEGDVVRHRFYVRGGFADVTPAGLTILAEEARNLSDASAQEIDVEVEAAKLKLLELDAGDTKRAVLEHQISYLEGLRSALAN.

This sequence belongs to the ATPase epsilon chain family. F-type ATPases have 2 components, CF(1) - the catalytic core - and CF(0) - the membrane proton channel. CF(1) has five subunits: alpha(3), beta(3), gamma(1), delta(1), epsilon(1). CF(0) has three main subunits: a, b and c.

The protein localises to the cell inner membrane. Its function is as follows. Produces ATP from ADP in the presence of a proton gradient across the membrane. This is ATP synthase epsilon chain from Hyphomonas neptunium (strain ATCC 15444).